The following is a 481-amino-acid chain: RuvB-like helicase 2 (481 aa).

76–83 (GPPSTGKT) serves as a coordination point for ATP.

Belongs to the RuvB family. In terms of assembly, may form heterododecamers with hel-1/rvb1. Component of the SWR1 chromatin remodeling complex, the INO80 chromatin remodeling complex, and of the R2TP complex.

The protein localises to the nucleus. It carries out the reaction ATP + H2O = ADP + phosphate + H(+). In terms of biological role, DNA helicase which participates in several chromatin remodeling complexes, including the SWR1 and the INO80 complexes. The SWR1 complex mediates the ATP-dependent exchange of histone H2A for the H2A variant H2A.Z leading to transcriptional regulation of selected genes by chromatin remodeling. The INO80 complex remodels chromatin by shifting nucleosomes and is involved in DNA repair. Also involved in pre-rRNA processing. In Neurospora crassa (strain ATCC 24698 / 74-OR23-1A / CBS 708.71 / DSM 1257 / FGSC 987), this protein is RuvB-like helicase 2 (hel-2).